A 418-amino-acid polypeptide reads, in one-letter code: Nuclear hormone receptor 114 (418 aa).

The segment at residues 12–87 (DHVCLVCQDF…VGMDRNALQQ (76 aa)) is a DNA-binding region (nuclear receptor). 2 consecutive NR C4-type zinc fingers follow at residues 15–35 (CLVC…CVGC) and 51–70 (CQFE…CRYC). Residues 89–130 (RDPIGYTKRTRRPKKELKTTSDCSSDEGASTPPSVSPLQLSP) form a disordered region. An NR LBD domain is found at 170 to 409 (PIRSLHEALC…AFARQLFFGD (240 aa)). The tract at residues 398 to 409 (FSAFARQLFFGD) is AF-2.

This sequence belongs to the nuclear hormone receptor family. As to expression, expressed in germ and intestinal cells and at low levels in the hypodermis.

The protein localises to the nucleus. In terms of biological role, probable transcription factor which may have a role in detoxifying dietary metabolites arising from bacterial tryptophan metabolism. Required for fertility and involved in proper postembryonic germline development, especially germline stem cell (GSC) proliferation. Required for activation of the methionine/S-adenosylmethionine (Met/SAM) cycle in response to low levels of SAM. This Caenorhabditis elegans protein is Nuclear hormone receptor 114.